Consider the following 379-residue polypeptide: Citrate utilization protein B (379 aa).

[4Fe-4S] cluster is bound by residues C28, C31, C34, C38, C62, C65, C68, and C72.

This chain is Citrate utilization protein B (citB), found in Escherichia coli.